A 502-amino-acid chain; its full sequence is MAPLKLNSRNLAQIFAAGKDRVKVPTYQRGSAVKEGIVHVGVGGFHRAHLAVYVDQLMQNHGVNDYAICGVGLQPFDAAMRDALRSQDHLYTVIERSAKGSFAHVVGSINSYLFAPDNREAVIAKMAHPDTHIVSLTITESGYYYNENTHELQAEHPDIQFDLDPANEKTPRTTFGFLYAALARRHQQGLRPFTVLSCDNMQKNGSITRHMLESFARLRNPELAKWIAEQGAFPNAMVDRITPQTSPTDKKALAETIGIEDSWPVVTEPFMQWVLEDQFSDGRPPFEKAGAQVVKNVHDVEQFEKHKLRLLNGSHSAIGYAGQMAGFEYVHEVMEHPLYNRFVWQMMQEEVKPLLPEIPGVDIDEYCKTLMERFSNPTIMDQLPRICLNASGKIPQFIMPSIAEAIWVTGPFRRLCFVAAAWFRYLNGIDDSGKTFNVDDPMREELQAKARAGGTNPAELLNVKSLFGDDLRSDKRFLQEITTAMEAIARDGIMKTMPKYVD.

37–48 (IVHVGVGGFHRA) provides a ligand contact to NAD(+).

This sequence belongs to the mannitol dehydrogenase family. In terms of assembly, monomer.

The enzyme catalyses D-mannitol + NAD(+) = D-fructose + NADH + H(+). Its function is as follows. Catalyzes the NAD(H)-dependent interconversion of D-fructose and D-mannitol in the mannitol metabolic pathway. The protein is Mannitol 2-dehydrogenase of Aspergillus terreus (strain NIH 2624 / FGSC A1156).